The chain runs to 284 residues: Tropomyosin (284 aa).

Residues 1-41 (MDAIKKKMQAMKLEKDNAVDRAETAEQQSRDAALRAEKAEE) are disordered. The stretch at 1 to 284 (MDAIKKKMQA…DQTFSELTGY (284 aa)) forms a coiled coil. A compositionally biased stretch (basic and acidic residues) spans 12–41 (KLEKDNAVDRAETAEQQSRDAALRAEKAEE).

This sequence belongs to the tropomyosin family. As to quaternary structure, homodimer.

Tropomyosin, in association with the troponin complex, plays a central role in the calcium dependent regulation of muscle contraction. This is Tropomyosin from Haemaphysalis longicornis (Bush tick).